The sequence spans 136 residues: MLSPKRTKFRKPHRGHLRGKATRGNTIVFGDFALQAQEPCWITSRQIEAGRRVLTRYVRRGGKLWIRIFPDKAVTMRPAGTRMGSGKGAPDYWVAVVHPGKILYEMQGVSETIARQAMRIAAYKMPVKTKFLTKQA.

Belongs to the universal ribosomal protein uL16 family. Part of the 50S ribosomal subunit.

It localises to the plastid. Its subcellular location is the chloroplast. The polypeptide is Large ribosomal subunit protein uL16c (Chlamydomonas sp. (strain WXM)).